The chain runs to 129 residues: Protein BUNDLE SHEATH DEFECTIVE 2, chloroplastic (129 aa).

A chloroplast-targeting transit peptide spans Met1–Lys43. The CR-type zinc finger occupies Gln49–Thr123. Residues Cys62, Cys65, Asn68, Cys73, Cys76, Cys97, Cys100, Glu105, Cys108, and Cys111 each coordinate Zn(2+).

This sequence belongs to the BSD2 chaperone family. In terms of assembly, interacts with the RuBisCo large subunit (RbcL) assembled as an intermediate complex made of eight RbcL and eight BSD2 subunits. As to expression, expressed in shoot tissues, in both bundle sheath and mesophyll cells.

It is found in the plastid. It localises to the chloroplast stroma. Functionally, chloroplast chaperone required for RuBisCo complex biogenesis and translational regulation of the RuBisCo large subunit (RbcL). Stabilizes an end-state assembly intermediate of eight RbcL subunits until the small subunits (RBCSs) become available to produce a complete stable RuBisCo complex containing eight small and eight large subunits. Involved in the differentiation of bundle sheath cells, especially chloroplast structure. This Zea mays (Maize) protein is Protein BUNDLE SHEATH DEFECTIVE 2, chloroplastic.